The primary structure comprises 386 residues: Succinyl-diaminopimelate desuccinylase (386 aa).

A Zn(2+)-binding site is contributed by H77. The active site involves D79. D110 is a Zn(2+) binding site. The active-site Proton acceptor is E144. The Zn(2+) site is built by E145, E173, and H359.

The protein belongs to the peptidase M20A family. DapE subfamily. In terms of assembly, homodimer. Requires Zn(2+) as cofactor. It depends on Co(2+) as a cofactor.

The catalysed reaction is N-succinyl-(2S,6S)-2,6-diaminopimelate + H2O = (2S,6S)-2,6-diaminopimelate + succinate. Its pathway is amino-acid biosynthesis; L-lysine biosynthesis via DAP pathway; LL-2,6-diaminopimelate from (S)-tetrahydrodipicolinate (succinylase route): step 3/3. Functionally, catalyzes the hydrolysis of N-succinyl-L,L-diaminopimelic acid (SDAP), forming succinate and LL-2,6-diaminopimelate (DAP), an intermediate involved in the bacterial biosynthesis of lysine and meso-diaminopimelic acid, an essential component of bacterial cell walls. This Methylibium petroleiphilum (strain ATCC BAA-1232 / LMG 22953 / PM1) protein is Succinyl-diaminopimelate desuccinylase.